The chain runs to 566 residues: Proline--tRNA ligase (566 aa).

The protein belongs to the class-II aminoacyl-tRNA synthetase family. ProS type 1 subfamily. In terms of assembly, homodimer.

The protein resides in the cytoplasm. The catalysed reaction is tRNA(Pro) + L-proline + ATP = L-prolyl-tRNA(Pro) + AMP + diphosphate. Catalyzes the attachment of proline to tRNA(Pro) in a two-step reaction: proline is first activated by ATP to form Pro-AMP and then transferred to the acceptor end of tRNA(Pro). As ProRS can inadvertently accommodate and process non-cognate amino acids such as alanine and cysteine, to avoid such errors it has two additional distinct editing activities against alanine. One activity is designated as 'pretransfer' editing and involves the tRNA(Pro)-independent hydrolysis of activated Ala-AMP. The other activity is designated 'posttransfer' editing and involves deacylation of mischarged Ala-tRNA(Pro). The misacylated Cys-tRNA(Pro) is not edited by ProRS. The sequence is that of Proline--tRNA ligase from Staphylococcus haemolyticus (strain JCSC1435).